The sequence spans 173 residues: Crossover junction endodeoxyribonuclease RuvC (173 aa).

Catalysis depends on residues Asp8, Glu67, and Asp139. 3 residues coordinate Mg(2+): Asp8, Glu67, and Asp139.

It belongs to the RuvC family. In terms of assembly, homodimer which binds Holliday junction (HJ) DNA. The HJ becomes 2-fold symmetrical on binding to RuvC with unstacked arms; it has a different conformation from HJ DNA in complex with RuvA. In the full resolvosome a probable DNA-RuvA(4)-RuvB(12)-RuvC(2) complex forms which resolves the HJ. It depends on Mg(2+) as a cofactor.

It localises to the cytoplasm. The catalysed reaction is Endonucleolytic cleavage at a junction such as a reciprocal single-stranded crossover between two homologous DNA duplexes (Holliday junction).. In terms of biological role, the RuvA-RuvB-RuvC complex processes Holliday junction (HJ) DNA during genetic recombination and DNA repair. Endonuclease that resolves HJ intermediates. Cleaves cruciform DNA by making single-stranded nicks across the HJ at symmetrical positions within the homologous arms, yielding a 5'-phosphate and a 3'-hydroxyl group; requires a central core of homology in the junction. The consensus cleavage sequence is 5'-(A/T)TT(C/G)-3'. Cleavage occurs on the 3'-side of the TT dinucleotide at the point of strand exchange. HJ branch migration catalyzed by RuvA-RuvB allows RuvC to scan DNA until it finds its consensus sequence, where it cleaves and resolves the cruciform DNA. This Edwardsiella ictaluri (strain 93-146) protein is Crossover junction endodeoxyribonuclease RuvC.